Consider the following 311-residue polypeptide: Porphobilinogen deaminase (311 aa).

At Cys-241 the chain carries S-(dipyrrolylmethanemethyl)cysteine.

The protein belongs to the HMBS family. In terms of assembly, monomer. It depends on dipyrromethane as a cofactor.

The enzyme catalyses 4 porphobilinogen + H2O = hydroxymethylbilane + 4 NH4(+). It participates in porphyrin-containing compound metabolism; protoporphyrin-IX biosynthesis; coproporphyrinogen-III from 5-aminolevulinate: step 2/4. Its function is as follows. Tetrapolymerization of the monopyrrole PBG into the hydroxymethylbilane pre-uroporphyrinogen in several discrete steps. This Carboxydothermus hydrogenoformans (strain ATCC BAA-161 / DSM 6008 / Z-2901) protein is Porphobilinogen deaminase.